We begin with the raw amino-acid sequence, 176 residues long: Ribosome maturation factor RimM (176 aa).

A PRC barrel domain is found at 99-173 (ADEYYWHDLL…TMTITPLEGL (75 aa)).

Belongs to the RimM family. Binds ribosomal protein uS19.

Its subcellular location is the cytoplasm. Its function is as follows. An accessory protein needed during the final step in the assembly of 30S ribosomal subunit, possibly for assembly of the head region. Essential for efficient processing of 16S rRNA. May be needed both before and after RbfA during the maturation of 16S rRNA. It has affinity for free ribosomal 30S subunits but not for 70S ribosomes. This chain is Ribosome maturation factor RimM, found in Trichlorobacter lovleyi (strain ATCC BAA-1151 / DSM 17278 / SZ) (Geobacter lovleyi).